A 292-amino-acid polypeptide reads, in one-letter code: MYFQDVILTLQNYWARQGCVIEQPSGVECGAGTFNPHTFLRVIGPEPWNVAYVEPSRRPTDGRYGENPNRLQRYFQFQVIMKPSPDNVQDLYLQSLNALGINPAQHDIRFVEDDWESPTLGAWGLGWEVWLNGMEVSQFTYFQQVGGIDLAPVSVELTYGLERLAMYLQGVESVYDLAWNKDVTYGNIYHQNEVEQSRHNFEASDAQMLLRHFNDFEGQCKAMLELGLPWPAYDYCLKCSHTFNLLDARGAISITERTGYIGRVRALAAGVARLYAAQREELGYPMLKKDAR.

The protein belongs to the class-II aminoacyl-tRNA synthetase family. In terms of assembly, tetramer of two alpha and two beta subunits.

The protein resides in the cytoplasm. It carries out the reaction tRNA(Gly) + glycine + ATP = glycyl-tRNA(Gly) + AMP + diphosphate. In Desulfovibrio desulfuricans (strain ATCC 27774 / DSM 6949 / MB), this protein is Glycine--tRNA ligase alpha subunit.